The following is a 1276-amino-acid chain: MVRLREIPRTATFAWSPGAASPLIATGTRAGAVDVDFSNETCLELWDLGLSNDDASQELQPIAKIGTDSGFNDLAWTDSQDNSRGVIAGALENGSLDLWDADKLINGSSDAIISRMTKHSGAIKALQFNPKHSNLLATGGAKGELYISDLNNIANPYRLGSTAARADDIECLDWNKKVAHILVTGSSAGFVTVWDVKTKKESLTLNNMGRKAVSAVAWDPEKPTKLITSTPLESDPLIYVWDLRNSHAPERTLKGHESGVLSLSWCPQDPDLLLSSGKDNRTICWNPQSGQAYGEFPVVTNWTFQTRWNPHNPNFFATASFDGRISIQTIQNTRTDTAQAIADQNQSLDGEDFFAKAQTQPQVSNFSLPKAPKWLERPSSATFGFGGRVVSVGLIEKGKRASRIKITPFEVDEAVAKSTETFETALKEGDLRSICETRASQAASEEEKADWKVIEALISGNPRKGLIEYLGFQDQADEAADKLAKLGLDKEDVNGDTLTESRGSGAKKHKRLQSMFDANPEADSFLSDLAASKGAKTNNPFHIFTGSESEAEQGITRALLLGNFEKALDVALKEDRMSDAFVIAICGGQKCIEKAQEHYFSKQTGGPNYTRLLASIVGKNLWDVVYNADLSNWKEVMAALCTFADDKEFADLCEALGDRLGEQIRSTDDKALRKDASFCFLAGSKLEKVVAMWIEELRENEQKGIETAADDTSFSIHVRALQGLIEKVTIFRQATNFQDTERTKEADWKLAMLYDKYIEYADVVATHGRLQVAQKYLDLVPEKHPEAEIARNRIKLAMRQAAPQRTQSTVPAARTTLNRPLPQINAYPPQPTFSSPAPPAPQNPYAPPTAAPSQPANPYAPPAAAPSQPSNPYAPPTAAAAIPQPQVNNPYAPIGGGGYTPAGYQPPQAPAYGVQSLGGGSVPPPPRASNQSPAVTTYTTATNLPAWNDLPEGFTKPPTSRRGTPATAAAAISSPFPNQSPTFSQGPPPPGMPPTQRAPSVPPPPKGTVPPPRVTSPPTGFTPASNLSAPPPAANPYASLPQSPPIGSTMGIPAPASIPRGPSPYNAAPTMPPPSNRYAPSPAVQAASPQLATRAAVPPPPPAAASPYAPQPAAQPPVASSYAPSTPPPSQLPMQQGPPQGPPSRPGTASSQRKAAPAPPKYPPGDRSHIPADAMPIFEILSADMQRVKTRAPSSFKAQVDDAERRLNILFDHLNNEDLLRPNTIADMAELARAIQARDYETAKTIHIDIMTNRTDECGNWMVGVKRLISMSRATP.

WD repeat units lie at residues 5–47, 66–109, 118–158, 164–204, 208–251, 255–295, and 298–338; these read REIP…ELWD, GTDS…NGSS, KHSG…NPYR, ARAD…ESLT, MGRK…APER, GHES…AYGE, and VVTN…TDTA. The stretch at 382–407 is one WD 8; interaction with sec13 repeat; sequence TFGFGGRVVSVGLIEKGKRASRIKIT. Disordered regions lie at residues 820–885 and 906–1171; these read PLPQ…IPQP and PPQA…SHIP. Residues 828–850 show a composition bias toward pro residues; sequence PPQPTFSSPAPPAPQNPYAPPTA. The span at 865-885 shows a compositional bias: low complexity; the sequence is APSQPSNPYAPPTAAAAIPQP. The span at 928 to 945 shows a compositional bias: polar residues; it reads ASNQSPAVTTYTTATNLP. Low complexity predominate over residues 957-985; sequence PPTSRRGTPATAAAAISSPFPNQSPTFSQ. The span at 1000–1015 shows a compositional bias: pro residues; that stretch reads SVPPPPKGTVPPPRVT. 2 stretches are compositionally biased toward low complexity: residues 1016-1028 and 1079-1096; these read SPPT…SNLS and APSP…TRAA. Over residues 1097–1115 the composition is skewed to pro residues; it reads VPPPPPAAASPYAPQPAAQ.

Belongs to the WD repeat SEC31 family. As to quaternary structure, the COPII coat is composed of at least 5 proteins: the sec23/24 complex, the sec13/31 complex, and the protein sar1. sec13 and sec31 make a 2:2 tetramer that forms the edge element of the COPII outer coat. The tetramer self-assembles in multiple copies to form the complete polyhedral cage. Interacts (via WD 8) with sec13.

It is found in the cytoplasmic vesicle. Its subcellular location is the COPII-coated vesicle membrane. The protein localises to the endoplasmic reticulum membrane. Component of the coat protein complex II (COPII) which promotes the formation of transport vesicles from the endoplasmic reticulum (ER). The coat has two main functions, the physical deformation of the endoplasmic reticulum membrane into vesicles and the selection of cargo molecules. In Aspergillus clavatus (strain ATCC 1007 / CBS 513.65 / DSM 816 / NCTC 3887 / NRRL 1 / QM 1276 / 107), this protein is Protein transport protein sec31 (sec31).